A 270-amino-acid polypeptide reads, in one-letter code: 3-phenylpropionate-dihydrodiol/cinnamic acid-dihydrodiol dehydrogenase (270 aa).

10–34 (FITGGGSGLGLALVERFIEEGAQVA) contributes to the NAD(+) binding site. Residue S143 coordinates substrate. Y156 (proton acceptor) is an active-site residue.

Belongs to the short-chain dehydrogenases/reductases (SDR) family.

The catalysed reaction is 3-(cis-5,6-dihydroxycyclohexa-1,3-dien-1-yl)propanoate + NAD(+) = 3-(2,3-dihydroxyphenyl)propanoate + NADH + H(+). It catalyses the reaction (2E)-3-(cis-5,6-dihydroxycyclohexa-1,3-dien-1-yl)prop-2-enoate + NAD(+) = (2E)-3-(2,3-dihydroxyphenyl)prop-2-enoate + NADH + H(+). It participates in aromatic compound metabolism; 3-phenylpropanoate degradation. Functionally, converts 3-phenylpropionate-dihydrodiol (PP-dihydrodiol) and cinnamic acid-dihydrodiol (CI-dihydrodiol) into 3-(2,3-dihydroxylphenyl)propanoic acid (DHPP) and 2,3-dihydroxicinnamic acid (DHCI), respectively. This is 3-phenylpropionate-dihydrodiol/cinnamic acid-dihydrodiol dehydrogenase from Escherichia coli (strain ATCC 8739 / DSM 1576 / NBRC 3972 / NCIMB 8545 / WDCM 00012 / Crooks).